The chain runs to 328 residues: Acyl-CoA wax alcohol acyltransferase 1 (328 aa).

The next 2 helical transmembrane spans lie at 12-32 (SLMLLQWPLSYLAIFWILQPL) and 34-53 (VYLLFTSLWPLPVLYFAWLF).

It belongs to the diacylglycerol acyltransferase family. Predominantly expressed in skin, where it is limited to the sebaceous gland. Expressed in more mature, centrally located cells just before their rupture and sebum release. Also expressed in all tissues except spleen. Expressed at higher level in thymus, prostate and testis.

The protein localises to the endoplasmic reticulum membrane. It carries out the reaction a long chain fatty alcohol + a fatty acyl-CoA = a wax ester + CoA. The enzyme catalyses 1,2-di-(9Z-octadecenoyl)-sn-glycerol + (9Z)-octadecenoyl-CoA = 1,2,3-tri-(9Z-octadecenoyl)-glycerol + CoA. It catalyses the reaction hexadecan-1-ol + (9Z)-octadecenoyl-CoA = hexadecanyl (9Z)-octadecenoate + CoA. The catalysed reaction is decan-1-ol + (9Z)-octadecenoyl-CoA = 1-O-decyl-(9Z)-octadecenoate + CoA. It carries out the reaction (9Z)-hexadecen-1-ol + (9Z)-octadecenoyl-CoA = 1-O-(9Z)-hexadecenyl (9Z)-octadecenoate + CoA. The enzyme catalyses octadecan-1-ol + (9Z)-octadecenoyl-CoA = 1-O-octadecyl (9Z)-octadecenoate + CoA. It catalyses the reaction (9Z)-octadecen-1-ol + (9Z)-octadecenoyl-CoA = 1-O-(9Z)-octadecenyl (9Z)-octadecenoate + CoA. The catalysed reaction is hexadecan-1-ol + hexadecanoyl-CoA = hexadecanyl hexadecanoate + CoA. It carries out the reaction hexadecan-1-ol + (9Z)-hexadecenoyl-CoA = 1-O-hexadecyl (9Z)-hexadecenoate + CoA. The enzyme catalyses hexadecan-1-ol + octadecanoyl-CoA = hexadecanyl octadecanoate + CoA. It catalyses the reaction eicosan-1-ol + (9Z)-octadecenoyl-CoA = 1-O-eicosanyl (9Z)-octadecenoate + CoA. Functionally, acyltransferase that catalyzes the formation of ester bonds between fatty alcohols and fatty acyl-CoAs to form wax monoesters. Shows a strong preference for decyl alcohol (C10), with less activity towards C16 and C18 alcohols. Shows a strong preference for saturated acyl-CoAs. The polypeptide is Acyl-CoA wax alcohol acyltransferase 1 (AWAT1) (Homo sapiens (Human)).